The primary structure comprises 363 residues: MIGWGDVYKVVAATVPLYFALFLGYGSVRWWRIFTREQCDAVNRLVAFFALPFFTFEFTLHTDPFQVNYRAVAADVISKAVIVAVIGAWARFMSKGGCAVSWSITSFSLSTLTNSLVVGVPMARAMYGEWAQQLVVQLSVFQAIVWLTLLLFVLEVRKAAIGMYVDGAEAAAAAGKDVEAAGAAAAAGTVVVAAAAGKPSLWALVKVVAHKLARNPNTYASFVGITWACLANRLHIALPSAFEGSVLIMSKSGTGMAMFSMGLFMAQQEKIIACGTSFAALGLVLKFALGPAAMAIGSIAVGLRGDVLRVAIIQAALPQSITSFIFAKEYGLHADVLSTAVIFGMLVSLPLLVGFYIVLELIR.

Transmembrane regions (helical) follow at residues 7-27 (VYKV…GYGS), 39-59 (CDAV…FEFT), 72-92 (VAAD…WARF), 103-123 (SITS…VPMA), 134-154 (LVVQ…LFVL), 222-242 (FVGI…PSAF), 246-266 (VLIM…LFMA), 281-301 (LGLV…SIAV), 307-327 (VLRV…FIFA), and 342-362 (IFGM…LELI).

It belongs to the auxin efflux carrier (TC 2.A.69.1) family. In terms of tissue distribution, expressed in leaves, shoot apex and panicles. Expressed in roots, stem bases, stems, leaves and young panicles.

It is found in the membrane. Functionally, may act as a component of the auxin efflux carrier. In Oryza sativa subsp. japonica (Rice), this protein is Probable auxin efflux carrier component 5a.